Reading from the N-terminus, the 291-residue chain is rRNA 2'-O-methyltransferase fibrillarin (291 aa).

Basic and acidic residues-rich tracts occupy residues 1 to 12 (MKKTNKRPDGRK) and 20 to 29 (FRSDKGEGRG). The segment at 1–45 (MKKTNKRPDGRKFQKGGKPFRSDKGEGRGRMNNKKKGSVNAGLDR) is disordered. 2 positions are modified to asymmetric dimethylarginine: R28 and R62. Residues 134-135 (TT), 153-154 (EF), 178-179 (DA), and 198-201 (DVSQ) each bind S-adenosyl-L-methionine.

The protein belongs to the methyltransferase superfamily. Fibrillarin family. As to quaternary structure, component of box C/D small nucleolar ribonucleoprotein (snoRNP) particles.

Its subcellular location is the nucleus. It localises to the nucleolus. It catalyses the reaction L-glutaminyl-[histone H2A] + S-adenosyl-L-methionine = N(5)-methyl-L-glutaminyl-[histone H2A] + S-adenosyl-L-homocysteine + H(+). S-adenosyl-L-methionine-dependent methyltransferase that has the ability to methylate both RNAs and proteins. Involved in pre-rRNA processing. Utilizes the methyl donor S-adenosyl-L-methionine to catalyze the site-specific 2'-hydroxyl methylation of ribose moieties in pre-ribosomal RNA. Site specificity is provided by a guide RNA that base pairs with the substrate. Methylation occurs at a characteristic distance from the sequence involved in base pairing with the guide RNA. Also acts as a protein methyltransferase by mediating methylation of 'Gln-105' of histone H2A (H2AQ105me), a modification that impairs binding of the FACT complex and is specifically present at 35S ribosomal DNA locus. This is rRNA 2'-O-methyltransferase fibrillarin (NOP1) from Encephalitozoon cuniculi (strain GB-M1) (Microsporidian parasite).